A 475-amino-acid chain; its full sequence is Exodeoxyribonuclease 7 large subunit (475 aa).

This sequence belongs to the XseA family. Heterooligomer composed of large and small subunits.

The protein localises to the cytoplasm. It carries out the reaction Exonucleolytic cleavage in either 5'- to 3'- or 3'- to 5'-direction to yield nucleoside 5'-phosphates.. Functionally, bidirectionally degrades single-stranded DNA into large acid-insoluble oligonucleotides, which are then degraded further into small acid-soluble oligonucleotides. The protein is Exodeoxyribonuclease 7 large subunit of Bartonella henselae (strain ATCC 49882 / DSM 28221 / CCUG 30454 / Houston 1) (Rochalimaea henselae).